Here is a 2318-residue protein sequence, read N- to C-terminus: Neurogenic locus notch homolog protein 3 (2318 aa).

Residues M1 to L14 are compositionally biased toward basic residues. The tract at residues M1 to P20 is disordered. The N-terminal stretch at M1 to A39 is a signal peptide. EGF-like domains are found at residues A40–Q78, L79–S119, and Q120–Q157. At A40–P1643 the chain is on the extracellular side. 99 cysteine pairs are disulfide-bonded: C43–C55, C49–C66, C68–C77, C83–C94, C88–C107, C109–C118, C124–C135, C129–C145, C147–C156, C163–C175, C169–C184, C186–C195, C202–C213, C207–C223, C225–C234, C241–C252, C246–C261, C263–C272, C279–C292, C286–C301, C303–C312, C319–C330, C324–C339, C341–C350, C356–C367, C361–C378, C380–C389, C396–C409, C403–C418, C420–C429, C436–C447, C441–C456, C458–C467, C474–C485, C479–C494, C496–C505, C512–C523, C517–C532, C534–C543, C550–C560, C555–C569, C571–C580, C587–C598, C592–C607, C609–C618, C625–C635, C630–C644, C646–C655, C662–C673, C667–C682, C684–C693, C700–C710, C705–C719, C721–C730, C739–C750, C744–C759, C761–C770, C776–C787, C781–C797, C799–C808, C815–C827, C821–C836, C838–C847, C854–C865, C859–C874, C876–C885, C892–C902, C897–C911, C913–C922, C929–C940, C934–C949, C951–C960, C967–C978, C972–C987, C989–C998, C1005–C1016, C1010–C1023, C1025–C1034, C1041–C1062, C1056–C1071, C1073–C1082, C1089–C1100, C1094–C1109, C1111–C1120, C1127–C1138, C1132–C1147, C1149–C1158, C1165–C1183, C1177–C1192, C1194–C1203, C1210–C1223, C1215–C1233, C1235–C1244, C1251–C1262, C1256–C1276, C1278–C1287, C1294–C1305, C1299–C1314, and C1316–C1325. The EGF-like 4; calcium-binding domain maps to D159 to E196. Residues P198–E235 form the EGF-like 5 domain. Residues N237–T273 form the EGF-like 6; calcium-binding domain. Residues D275 to S313 enclose the EGF-like 7 domain. The region spanning N315–H351 is the EGF-like 8; calcium-binding domain. The EGF-like 9 domain maps to L352–D390. The region spanning D392 to E430 is the EGF-like 10; calcium-binding domain. Residues D432 to E468 enclose the EGF-like 11; calcium-binding domain. The region spanning D470–Q506 is the EGF-like 12; calcium-binding domain. Residues D508–E544 form the EGF-like 13; calcium-binding domain. One can recognise an EGF-like 14; calcium-binding domain in the interval N546–E581. Residues Q583–E619 enclose the EGF-like 15; calcium-binding domain. An EGF-like 16; calcium-binding domain is found at N621–N656. One can recognise an EGF-like 17; calcium-binding domain in the interval E658–L694. 3 EGF-like domains span residues A696–S731, A735–E771, and V772–Q809. The region spanning D811 to D848 is the EGF-like 21; calcium-binding domain. The region spanning D850–A886 is the EGF-like 22; calcium-binding domain. Residues D888 to E923 form the EGF-like 23; calcium-binding domain. 5 consecutive EGF-like domains span residues D925–Q961, E963–Q999, P1001–D1035, Q1037–E1083, and E1085–E1121. An EGF-like 29; calcium-binding domain is found at N1123–E1159. The region spanning N1161–E1204 is the EGF-like 30; calcium-binding domain. N1180 carries N-linked (GlcNAc...) asparagine glycosylation. 4 consecutive EGF-like domains span residues D1206–Q1245, A1247–E1288, V1290–R1326, and T1336–E1374. N-linked (GlcNAc...) asparagine glycosylation occurs at N1337. Cystine bridges form between C1340–C1351, C1345–C1362, C1364–C1373, C1388–C1411, C1393–C1406, C1402–C1418, C1429–C1452, C1434–C1447, C1443–C1459, C1468–C1494, C1476–C1489, and C1485–C1501. LNR repeat units lie at residues C1388–Q1428, C1429–R1466, and C1468–P1506. The N-linked (GlcNAc...) asparagine glycan is linked to N1439. A helical membrane pass occupies residues L1644–M1664. At V1665 to A2318 the chain is on the cytoplasmic side. 5 ANK repeats span residues T1839–A1868, S1872–A1902, D1906–A1935, L1939–M1968, and K1972–I2001. Disordered stretches follow at residues L2025–C2045 and Q2058–G2126. A compositionally biased stretch (low complexity) spans P2028–C2045. Omega-N-methylarginine is present on R2174. Low complexity predominate over residues S2184 to P2193. Residues S2184–A2318 form a disordered region. Residues H2242–P2261 are PEST-like. The span at S2262–S2282 shows a compositional bias: low complexity. Positions S2296–G2305 are enriched in polar residues.

The protein belongs to the NOTCH family. Interacts with PSMA1. Heterodimer of a C-terminal fragment N(TM) and a N-terminal fragment N(EC) which are probably linked by disulfide bonds. Interacts with MAML1, MAML2 and MAML3 which act as transcriptional coactivators for NOTCH3. Interacts with HIF1AN. Post-translationally, synthesized in the endoplasmic reticulum as an inactive form which is proteolytically cleaved by a furin-like convertase in the trans-Golgi network before it reaches the plasma membrane to yield an active, ligand-accessible form. Cleavage results in a C-terminal fragment N(TM) and a N-terminal fragment N(EC). Following ligand binding, it is cleaved by TNF-alpha converting enzyme (TACE) to yield a membrane-associated intermediate fragment called notch extracellular truncation (NEXT). This fragment is then cleaved by presenilin dependent gamma-secretase to release a notch-derived peptide containing the intracellular domain (NICD) from the membrane. In terms of processing, phosphorylated. Hydroxylated by HIF1AN. As to expression, proliferating neuroepithelium.

The protein localises to the cell membrane. It is found in the nucleus. In terms of biological role, functions as a receptor for membrane-bound ligands Jagged1, Jagged2 and Delta1 to regulate cell-fate determination. Upon ligand activation through the released notch intracellular domain (NICD) it forms a transcriptional activator complex with RBPJ/RBPSUH and activates genes of the enhancer of split locus. Affects the implementation of differentiation, proliferation and apoptotic programs. May play a role during CNS development. This is Neurogenic locus notch homolog protein 3 (Notch3) from Mus musculus (Mouse).